Here is a 205-residue protein sequence, read N- to C-terminus: MIYLDFINQQTTQTAKALLGVKIIYQDDYQTYTGYIVETEAYLGIQDKAAHGFGGKITPKVTSLYKKGGTIYAHVMHTHLLINFVTRTEGIPEGVLIRAIEPDEGIGAMNVNRGKSGYELTNGPGKWTKAFNIPRSIDGSTLNDCKLSIDTNHRKYPKTIIESGRIGIPNKGEWTNKPLRFTVKGNPYVSRMRKSDFQNPDDTWK.

The protein belongs to the DNA glycosylase MPG family.

In Staphylococcus epidermidis (strain ATCC 35984 / DSM 28319 / BCRC 17069 / CCUG 31568 / BM 3577 / RP62A), this protein is Putative 3-methyladenine DNA glycosylase.